A 247-amino-acid chain; its full sequence is NH(3)-dependent NAD(+) synthetase (247 aa).

Position 29–36 (29–36 (GISGGIDS)) interacts with ATP. D35 provides a ligand contact to Mg(2+). R120 contributes to the deamido-NAD(+) binding site. T140 contacts ATP. Mg(2+) is bound at residue E145. Residues K153 and D160 each coordinate deamido-NAD(+). ATP is bound by residues K169 and S191. Position 237-238 (237-238 (HK)) interacts with deamido-NAD(+).

The protein belongs to the NAD synthetase family. As to quaternary structure, homodimer.

It carries out the reaction deamido-NAD(+) + NH4(+) + ATP = AMP + diphosphate + NAD(+) + H(+). Its pathway is cofactor biosynthesis; NAD(+) biosynthesis; NAD(+) from deamido-NAD(+) (ammonia route): step 1/1. Functionally, catalyzes the ATP-dependent amidation of deamido-NAD to form NAD. Uses ammonia as a nitrogen source. The sequence is that of NH(3)-dependent NAD(+) synthetase from Alkaliphilus metalliredigens (strain QYMF).